A 433-amino-acid chain; its full sequence is Histone acetyltransferase type B subunit 2 (433 aa).

WD repeat units lie at residues 134 to 174 (NHDG…NTPS), 187 to 227 (GQHK…KPNN), 237 to 277 (GHTA…SAPK), 282 to 322 (AHTG…VKLH), and 326 to 366 (SHTD…QEQT). An interaction with the histone H4 N-terminus region spans residues 368–372 (DDAED). A WD 6 repeat occupies 383–433 (GHTSRPTDLAWSPHMEWALTSAAEDNIVMVWRPSKAVIDTGNEELTPDDLE).

It belongs to the WD repeat RBAP46/RBAP48/MSI1 family. In terms of assembly, component of the HAT-B complex composed of at least HAT1 and HAT2. The HAT-B complex binds to histone H4 tail.

It localises to the cytoplasm. The protein resides in the nucleus. Functionally, regulatory subunit of the histone acetylase B (HAT-B) complex. The complex acetylates 'Lys-12' of histone H4 which is required for telomeric silencing. In Mycosarcoma maydis (Corn smut fungus), this protein is Histone acetyltransferase type B subunit 2 (HAT2).